The sequence spans 790 residues: Endonuclease MutS2 (790 aa).

Residue G334 to T341 coordinates ATP. The Smr domain maps to L713–H788.

Belongs to the DNA mismatch repair MutS family. MutS2 subfamily. Homodimer. Binds to stalled ribosomes, contacting rRNA.

Its function is as follows. Endonuclease that is involved in the suppression of homologous recombination and thus may have a key role in the control of bacterial genetic diversity. Acts as a ribosome collision sensor, splitting the ribosome into its 2 subunits. Detects stalled/collided 70S ribosomes which it binds and splits by an ATP-hydrolysis driven conformational change. Acts upstream of the ribosome quality control system (RQC), a ribosome-associated complex that mediates the extraction of incompletely synthesized nascent chains from stalled ribosomes and their subsequent degradation. Probably generates substrates for RQC. This is Endonuclease MutS2 from Caldanaerobacter subterraneus subsp. tengcongensis (strain DSM 15242 / JCM 11007 / NBRC 100824 / MB4) (Thermoanaerobacter tengcongensis).